The chain runs to 78 residues: Antitoxin VapB1 (78 aa).

One can recognise a SpoVT-AbrB domain in the interval 3 to 44 (TKVFQSGNSQAVRIPMDFRFDVDTVEIFRKENGDVVLRPVSK).

This sequence belongs to the VapB family. As to quaternary structure, forms multimers, as well forming as a complex with VapC1.

Its function is as follows. Antitoxin component of a type II toxin-antitoxin (TA) system. Upon expression in E.coli neutralizes the effect of toxin VapC1. In vitro inhibits the RNase activity of VapC1. This chain is Antitoxin VapB1 (vapB1), found in Haemophilus influenzae (strain R2866).